Here is a 256-residue protein sequence, read N- to C-terminus: uncharacterized protein (256 aa).

Residues 10-64 (IRALRESRDWSLADLAAATGVSTMGLSYLERGARKPHKSTVQKVENGLGLPPGTY) enclose the HTH cro/C1-type domain. The H-T-H motif DNA-binding region spans 21–40 (LADLAAATGVSTMGLSYLER).

This is an uncharacterized protein from Mycobacterium bovis (strain ATCC BAA-935 / AF2122/97).